The primary structure comprises 559 residues: Transcription factor tstO (559 aa).

Residues 23 to 50 constitute a DNA-binding region (zn(2)-C6 fungal-type); sequence CDACQSAKVRCGREKPTCRRCQNQGKTC. 2 disordered regions span residues 166 to 316 and 453 to 477; these read GPST…TGFS and ASPP…ISTA. The segment covering 222 to 232 has biased composition (low complexity); it reads SSESLSLEPSS. Residues 255-267 are compositionally biased toward polar residues; that stretch reads TRGSQKISPNPHS. Residues 268-279 show a composition bias toward basic and acidic residues; it reads IDSRTSSRDKSF. Low complexity-rich tracts occupy residues 286 to 316 and 462 to 477; these read STLG…TGFS and NNNT…ISTA.

Its subcellular location is the nucleus. In terms of biological role, transcription factore; part of the gene cluster that mediates the biosynthesis of the antihypercholesterolemic agents phomoidrides which are dimeric anhydrides. Probably regulates the expression of the genes from the cluster. The sequence is that of Transcription factor tstO from Talaromyces stipitatus (strain ATCC 10500 / CBS 375.48 / QM 6759 / NRRL 1006) (Penicillium stipitatum).